The primary structure comprises 386 residues: Succinate--CoA ligase [ADP-forming] subunit beta (386 aa).

The ATP-grasp domain maps to 9–244 (KELLKQFGVP…LDEEDPAEIE (236 aa)). Residues Lys46, 53–55 (GRG), Glu99, Ala102, and Glu107 each bind ATP. 2 residues coordinate Mg(2+): Asn199 and Asp213. Substrate contacts are provided by residues Asn264 and 321 to 323 (GIM).

It belongs to the succinate/malate CoA ligase beta subunit family. Heterotetramer of two alpha and two beta subunits. The cofactor is Mg(2+).

It carries out the reaction succinate + ATP + CoA = succinyl-CoA + ADP + phosphate. The catalysed reaction is GTP + succinate + CoA = succinyl-CoA + GDP + phosphate. The protein operates within carbohydrate metabolism; tricarboxylic acid cycle; succinate from succinyl-CoA (ligase route): step 1/1. Succinyl-CoA synthetase functions in the citric acid cycle (TCA), coupling the hydrolysis of succinyl-CoA to the synthesis of either ATP or GTP and thus represents the only step of substrate-level phosphorylation in the TCA. The beta subunit provides nucleotide specificity of the enzyme and binds the substrate succinate, while the binding sites for coenzyme A and phosphate are found in the alpha subunit. The protein is Succinate--CoA ligase [ADP-forming] subunit beta of Bordetella avium (strain 197N).